Reading from the N-terminus, the 458-residue chain is UDP-N-acetylmuramate--L-alanine ligase (458 aa).

ATP is bound at residue Gly118–Thr124.

This sequence belongs to the MurCDEF family.

It localises to the cytoplasm. The catalysed reaction is UDP-N-acetyl-alpha-D-muramate + L-alanine + ATP = UDP-N-acetyl-alpha-D-muramoyl-L-alanine + ADP + phosphate + H(+). It participates in cell wall biogenesis; peptidoglycan biosynthesis. Cell wall formation. This is UDP-N-acetylmuramate--L-alanine ligase from Clostridium botulinum (strain Kyoto / Type A2).